A 297-amino-acid chain; its full sequence is MRAINKFLITVCIALLASVAVALGDGEETGEAEEFKVIDHSKVWEEKGITKYEGSKTCIQCHEDKVRQFFHSYHYQLFSENEGINGKTMIFGGKMAFNDYCMAMFVNNGTKVVNWIGYITLKKAPEGYEDLVGSFTGLTGCSMCHGVGMGLPPSPQESEEQLGNIDCLACHAKPDVYVSGVLGIKLGLKNVTKDDQGRWRYVINVPTEELAKSIINRPQSKNCLACHAFSGGGPHLKRPNIAPDLLNPELAAEFDVHFKAGLGCTDCHSGENHEFGTNSVDTWSREGEGAEVQQLPH.

Positions 1–24 are cleaved as a signal peptide; that stretch reads MRAINKFLITVCIALLASVAVALG. Cysteine 58, cysteine 61, histidine 62, cysteine 141, cysteine 144, histidine 145, cysteine 167, cysteine 170, histidine 171, cysteine 223, cysteine 226, histidine 227, cysteine 264, cysteine 267, and histidine 268 together coordinate heme. The interval 277–297 is disordered; it reads TNSVDTWSREGEGAEVQQLPH.

Binds 5 heme groups per subunit.

This is an uncharacterized protein from Archaeoglobus fulgidus (strain ATCC 49558 / DSM 4304 / JCM 9628 / NBRC 100126 / VC-16).